The chain runs to 312 residues: Type II methyltransferase M.NgoMIV (312 aa).

The region spanning 3–311 (FTSLEICAGA…RQIIKALKKE (309 aa)) is the SAM-dependent MTase C5-type domain. Residue Cys74 is part of the active site.

Belongs to the class I-like SAM-binding methyltransferase superfamily. C5-methyltransferase family.

It catalyses the reaction a 2'-deoxycytidine in DNA + S-adenosyl-L-methionine = a 5-methyl-2'-deoxycytidine in DNA + S-adenosyl-L-homocysteine + H(+). In terms of biological role, a methylase, recognizes the double-stranded sequence 5'-GCCGGC-3', methylates C-2 on both strands, and protects the DNA from cleavage by the NgoMIV endonuclease. The protein is Type II methyltransferase M.NgoMIV (ngoMIVM) of Neisseria gonorrhoeae.